A 341-amino-acid chain; its full sequence is NADH-quinone oxidoreductase subunit H 1 (341 aa).

The next 9 helical transmembrane spans lie at 7–27 (IILT…ISLL), 46–66 (PNVV…KYIF), 80–100 (FFLA…VIPF), 111–131 (VAIL…IMGG), 157–177 (LGLI…SHIV), 183–203 (AFGL…LFFI), 244–264 (YIAI…GWLS), 273–293 (VFWM…VKAI), and 305–325 (IGWK…AFLA).

This sequence belongs to the complex I subunit 1 family. NDH-1 is composed of 14 different subunits. Subunits NuoA, H, J, K, L, M, N constitute the membrane sector of the complex.

It is found in the cell inner membrane. It catalyses the reaction a quinone + NADH + 5 H(+)(in) = a quinol + NAD(+) + 4 H(+)(out). In terms of biological role, NDH-1 shuttles electrons from NADH, via FMN and iron-sulfur (Fe-S) centers, to quinones in the respiratory chain. The immediate electron acceptor for the enzyme in this species is believed to be ubiquinone. Couples the redox reaction to proton translocation (for every two electrons transferred, four hydrogen ions are translocated across the cytoplasmic membrane), and thus conserves the redox energy in a proton gradient. This subunit may bind ubiquinone. The protein is NADH-quinone oxidoreductase subunit H 1 of Cereibacter sphaeroides (strain ATCC 17029 / ATH 2.4.9) (Rhodobacter sphaeroides).